We begin with the raw amino-acid sequence, 304 residues long: Coenzyme PQQ synthesis protein B (304 aa).

It belongs to the PqqB family.

Its pathway is cofactor biosynthesis; pyrroloquinoline quinone biosynthesis. Its function is as follows. May be involved in the transport of PQQ or its precursor to the periplasm. The protein is Coenzyme PQQ synthesis protein B of Pseudomonas paraeruginosa (strain DSM 24068 / PA7) (Pseudomonas aeruginosa (strain PA7)).